Consider the following 274-residue polypeptide: Kit ligand (274 aa).

Residues 1–25 (MKKTQTWIITCIYLQLLLFNPLVRT) form the signal peptide. At 26–215 (KGICRNRVTD…ANPLGDSNLQ (190 aa)) the chain is on the extracellular side. Intrachain disulfides connect Cys29–Cys114 and Cys68–Cys164. Residues Asn90, Asn97, Asn145, and Asn196 are each glycosylated (N-linked (GlcNAc...) asparagine). The helical transmembrane segment at 216-238 (WAAMALPAFFSLVIGFAFGALYW) threads the bilayer. At 239–274 (KKKQPNLTRTAENIQINEEDNEISMLQEKEREFQEV) the chain is on the cytoplasmic side.

It belongs to the SCF family. As to quaternary structure, homodimer, non-covalently linked. Heterotetramer with KIT, binding two KIT molecules; thereby mediates KIT dimerization and subsequent activation by autophosphorylation. A soluble form is produced by proteolytic processing of isoform 1 in the extracellular domain.

It is found in the cytoplasm. The protein localises to the cytoskeleton. Its subcellular location is the cell membrane. It localises to the cell projection. The protein resides in the lamellipodium. It is found in the filopodium. The protein localises to the secreted. Functionally, ligand for the receptor-type protein-tyrosine kinase KIT. Plays an essential role in the regulation of cell survival and proliferation, hematopoiesis, stem cell maintenance, gametogenesis, mast cell development, migration and function, and in melanogenesis. KITLG/SCF binding can activate several signaling pathways. Promotes phosphorylation of PIK3R1, the regulatory subunit of phosphatidylinositol 3-kinase, and subsequent activation of the kinase AKT1. KITLG/SCF and KIT also transmit signals via GRB2 and activation of RAS, RAF1 and the MAP kinases MAPK1/ERK2 and/or MAPK3/ERK1. KITLG/SCF and KIT promote activation of STAT family members STAT1, STAT3 and STAT5. KITLG/SCF and KIT promote activation of PLCG1, leading to the production of the cellular signaling molecules diacylglycerol and inositol 1,4,5-trisphosphate. KITLG/SCF acts synergistically with other cytokines, probably interleukins. This Neovison vison (American mink) protein is Kit ligand (KITLG).